A 136-amino-acid polypeptide reads, in one-letter code: NADH-ubiquinone oxidoreductase chain 2 (136 aa).

4 helical membrane passes run 12–32 (YFLI…NQSF), 34–54 (FLIP…MWLV), 74–94 (IGPL…WLMV), and 99–119 (FLLM…AVIL).

The protein belongs to the complex I subunit 2 family.

Its subcellular location is the mitochondrion inner membrane. The catalysed reaction is a ubiquinone + NADH + 5 H(+)(in) = a ubiquinol + NAD(+) + 4 H(+)(out). Functionally, core subunit of the mitochondrial membrane respiratory chain NADH dehydrogenase (Complex I) that is believed to belong to the minimal assembly required for catalysis. Complex I functions in the transfer of electrons from NADH to the respiratory chain. The immediate electron acceptor for the enzyme is believed to be ubiquinone. This chain is NADH-ubiquinone oxidoreductase chain 2 (ND2), found in Artemia salina (Brine shrimp).